The following is a 138-amino-acid chain: Acidic phospholipase A2 CoaPLA2 (138 aa).

The N-terminal stretch at 1 to 16 is a signal peptide; the sequence is MRTLWIVAVLLLGVEG. 7 disulfide bridges follow: Cys42-Cys131, Cys44-Cys60, Cys59-Cys111, Cys65-Cys138, Cys66-Cys104, Cys73-Cys97, and Cys91-Cys102. Ca(2+) contacts are provided by Tyr43, Gly45, and Gly47. Residue His63 is part of the active site. Residue Asp64 participates in Ca(2+) binding. Asp105 is a catalytic residue.

It belongs to the phospholipase A2 family. Group II subfamily. D49 sub-subfamily. Homodimer. The cofactor is Ca(2+). In terms of tissue distribution, expressed by the venom gland.

It is found in the secreted. It carries out the reaction a 1,2-diacyl-sn-glycero-3-phosphocholine + H2O = a 1-acyl-sn-glycero-3-phosphocholine + a fatty acid + H(+). Its function is as follows. Snake venom phospholipase A2 (PLA2) that shows very low inhibition of ADP-induced platelet aggregation in platelet-rich plasma of human, rabbit and guinea pig. Shows edema-inducing activity and myotoxicity. PLA2 catalyzes the calcium-dependent hydrolysis of the 2-acyl groups in 3-sn-phosphoglycerides. This Crotalus lutosus abyssus (Grand Canyon rattlesnake) protein is Acidic phospholipase A2 CoaPLA2.